The primary structure comprises 325 residues: Lactonase drp35 (325 aa).

10 residues coordinate Ca(2+): Glu46, Thr108, Gly110, Asp128, Thr131, Tyr133, Asp136, Asn183, Asp234, and Ser235. The active-site Proton donor is the Asp234.

The protein belongs to the SMP-30/CGR1 family. Requires Ca(2+) as cofactor.

The protein localises to the cytoplasm. Functionally, exhibits lactonase activity. Acts in cells with perturbed membrane integrity and is possibly related to the membrane homeostasis. The polypeptide is Lactonase drp35 (drp35) (Staphylococcus epidermidis (strain ATCC 35984 / DSM 28319 / BCRC 17069 / CCUG 31568 / BM 3577 / RP62A)).